The primary structure comprises 416 residues: Multifunctional CCA protein (416 aa).

ATP contacts are provided by glycine 8 and arginine 11. Residues glycine 8 and arginine 11 each contribute to the CTP site. Mg(2+) is bound by residues aspartate 21 and aspartate 23. Residues arginine 91, arginine 138, and arginine 141 each coordinate ATP. CTP-binding residues include arginine 91, arginine 138, and arginine 141. Residues 229–331 (TGLHQELVSD…YELLQRCDAF (103 aa)) form the HD domain.

This sequence belongs to the tRNA nucleotidyltransferase/poly(A) polymerase family. Bacterial CCA-adding enzyme type 1 subfamily. In terms of assembly, monomer. Can also form homodimers and oligomers. The cofactor is Mg(2+). Ni(2+) serves as cofactor.

It carries out the reaction a tRNA precursor + 2 CTP + ATP = a tRNA with a 3' CCA end + 3 diphosphate. The enzyme catalyses a tRNA with a 3' CCA end + 2 CTP + ATP = a tRNA with a 3' CCACCA end + 3 diphosphate. Catalyzes the addition and repair of the essential 3'-terminal CCA sequence in tRNAs without using a nucleic acid template. Adds these three nucleotides in the order of C, C, and A to the tRNA nucleotide-73, using CTP and ATP as substrates and producing inorganic pyrophosphate. tRNA 3'-terminal CCA addition is required both for tRNA processing and repair. Also involved in tRNA surveillance by mediating tandem CCA addition to generate a CCACCA at the 3' terminus of unstable tRNAs. While stable tRNAs receive only 3'-terminal CCA, unstable tRNAs are marked with CCACCA and rapidly degraded. The polypeptide is Multifunctional CCA protein (Xylella fastidiosa (strain M12)).